The primary structure comprises 247 residues: GTP cyclohydrolase 1 type 2 homolog (247 aa).

A divalent metal cation is bound by residues His-63, His-64, Asp-101, His-215, and Glu-219.

It belongs to the GTP cyclohydrolase I type 2/NIF3 family. Homohexamer.

The chain is GTP cyclohydrolase 1 type 2 homolog from Buchnera aphidicola subsp. Baizongia pistaciae (strain Bp).